A 3329-amino-acid chain; its full sequence is Breast cancer type 2 susceptibility protein homolog (3329 aa).

Residues 1-40 (MPVEYKRRPTFWEIFKARCSTADLGPISLNWFEELSSEAP) form an interaction with PALB2 region. Disordered stretches follow at residues 37–69 (SEAP…QRNP) and 207–241 (EARS…SVPS). Phosphoserine occurs at positions 435 and 481. The tract at residues 628–650 (PDSSDKKRCLPNDPEEPSLTNSF) is disordered. An interaction with NPM1 region spans residues 628–979 (PDSSDKKRCL…DKWSEFLDPV (352 aa)). Phosphoserine is present on Ser-735. Residues 934-953 (EKSRNNIEQHQKGTEDKDFK) are compositionally biased toward basic and acidic residues. The tract at residues 934–965 (EKSRNNIEQHQKGTEDKDFKSNSSLNMKSDGN) is disordered. The segment covering 954–965 (SNSSLNMKSDGN) has biased composition (polar residues). 2 BRCA2 repeats span residues 981 to 1015 (NHNF…DIEE) and 1192 to 1226 (NEME…DIEN). The tract at residues 982-2035 (HNFGGSFRTA…LHKVKGMLEE (1054 aa)) is interaction with RAD51. Residues 1296–1340 (NTKHEDSYTSSQRNNLENSDGSMSSTSGPVYIHKGDSDLPADQGS) form a disordered region. Over residues 1303 to 1323 (YTSSQRNNLENSDGSMSSTSG) the composition is skewed to polar residues. 5 BRCA2 repeats span residues 1394 to 1428 (IKEF…RETD), 1491 to 1525 (KEPT…ETQY), 1623 to 1657 (TEDS…EQGD), 1924 to 1958 (PSRT…EMDG), and 2004 to 2038 (NSSV…EFDL). Ser-2048 carries the post-translational modification Phosphoserine. A disordered region spans residues 2073–2099 (NSKLQKTYNDKSSLPSNYKESGSSGNT). Over residues 2074–2099 (SKLQKTYNDKSSLPSNYKESGSSGNT) the composition is skewed to polar residues. Residues 2219-2285 (KRGGVTVDAV…EPVTCGPFCS (67 aa)) form an interaction with HSF2BP region. Positions 2298-2466 (TSPAQELLSK…SPKQLYIYGV (169 aa)) are interaction with FANCD2. The disordered stretch occupies residues 2361 to 2393 (FHGDEHFNSKNVNLEGKNQKSTDGDREDGNDSH). Basic and acidic residues predominate over residues 2377–2393 (KNQKSTDGDREDGNDSH). An interaction with SEM1 region spans residues 2402–2753 (MSSLQSARDL…QRVYPLQWVE (352 aa)). The Nuclear export signal; masked by interaction with SEM1 motif lies at 2603 to 2619 (AAKTLVLCISDIISPST). Residue Ser-3214 is modified to Phosphoserine; by CDK1 and CDK2. 2 disordered regions span residues 3221-3257 (FQPP…VSLP) and 3273-3329 (QALT…AVES). Ser-3241 carries the post-translational modification Phosphoserine. The segment covering 3309–3329 (SRKESLRDCRGDSSEKLAVES) has biased composition (basic and acidic residues).

Monomer and dimer. Interacts with RAD51; regulates RAD51 recruitment and function at sites of DNA repair. Interacts with SEM1, WDR16, USP11, DMC1, ROCK2 and NPM1. Interacts with both nonubiquitinated and monoubiquitinated FANCD2; this complex also includes XRCC3 and phosphorylated FANCG. Part of a BRCA complex containing BRCA1, BRCA2 and PALB2. Component of the homologous recombination repair (HR) complex composed of ERCC5/XPG, BRCA2, PALB2, DSS1 and RAD51. Within the complex, interacts with ERCC5/XPG and PALB2. Interacts directly with PALB2 which may serve as a scaffold for a HR complex containing PALB2, BRCA2, RAD51C, RAD51 and XRCC3. Interacts with BRCA1 only in the presence of PALB2 which serves as the bridging protein. Interacts with POLH; the interaction is direct. Interacts with the TREX-2 complex subunits PCID2 and SEM1. Interacts with HSF2BP and BRME1; the interaction with HSF2BP is direct and allows the formation of a ternary complex. The complex BRME1:HSF2BP:BRCA2 interacts with SPATA22, MEIOB and RAD51. Phosphorylated by ATM upon irradiation-induced DNA damage. Phosphorylation by CHEK1 and CHEK2 regulates interaction with RAD51. Phosphorylation at Ser-3291 by CDK1 and CDK2 is low in S phase when recombination is active, but increases as cells progress towards mitosis; this phosphorylation prevents homologous recombination-dependent repair during S phase and G2 by inhibiting RAD51 binding. In terms of processing, ubiquitinated in the absence of DNA damage; this does not lead to proteasomal degradation. In contrast, ubiquitination in response to DNA damage leads to proteasomal degradation. In terms of tissue distribution, widely expressed. Highest expression in cerebellum, testis, ileum, appendix, epididymis, ovary and mammary gland. No expression in lung.

The protein localises to the nucleus. The protein resides in the cytoplasm. It is found in the cytoskeleton. Its subcellular location is the microtubule organizing center. It localises to the centrosome. In terms of biological role, involved in double-strand break repair and/or homologous recombination. Binds RAD51 and potentiates recombinational DNA repair by promoting assembly of RAD51 onto single-stranded DNA (ssDNA). Acts by targeting RAD51 to ssDNA over double-stranded DNA, enabling RAD51 to displace replication protein-A (RPA) from ssDNA and stabilizing RAD51-ssDNA filaments by blocking ATP hydrolysis. Part of a PALB2-scaffolded HR complex containing RAD51C and which is thought to play a role in DNA repair by HR. May participate in S phase checkpoint activation. Binds selectively to ssDNA, and to ssDNA in tailed duplexes and replication fork structures. May play a role in the extension step after strand invasion at replication-dependent DNA double-strand breaks; together with PALB2 is involved in both POLH localization at collapsed replication forks and DNA polymerization activity. In concert with NPM1, regulates centrosome duplication. Interacts with the TREX-2 complex (transcription and export complex 2) subunits PCID2 and SEM1, and is required to prevent R-loop-associated DNA damage and thus transcription-associated genomic instability, independently of its known role in homologous recombination. In Mus musculus (Mouse), this protein is Breast cancer type 2 susceptibility protein homolog.